A 191-amino-acid polypeptide reads, in one-letter code: Nascent polypeptide-associated complex subunit alpha (191 aa).

The NAC-A/B domain occupies 24 to 89 (SRPERKARKA…AKVEDPNSAA (66 aa)). A disordered region spans residues 126-149 (QDAPSADSSAPAPSGEATDASASG). The segment covering 127–139 (DAPSADSSAPAPS) has biased composition (low complexity). The region spanning 153–191 (VSDEEIQLIVAQTGVDEAKAREAYISEKGDLINAIMKLQ) is the UBA domain.

This sequence belongs to the NAC-alpha family. In terms of assembly, part of the nascent polypeptide-associated complex (NAC), consisting of EGD2 and EGD1. NAC associates with ribosomes via EGD1.

The protein localises to the cytoplasm. It localises to the nucleus. In terms of biological role, component of the nascent polypeptide-associated complex (NAC), a dynamic component of the ribosomal exit tunnel, protecting the emerging polypeptides from interaction with other cytoplasmic proteins to ensure appropriate nascent protein targeting. The NAC complex also promotes mitochondrial protein import by enhancing productive ribosome interactions with the outer mitochondrial membrane and blocks the inappropriate interaction of ribosomes translating non-secretory nascent polypeptides with translocation sites in the membrane of the endoplasmic reticulum. EGD2 may also be involved in transcription regulation. In Cryptococcus neoformans var. neoformans serotype D (strain B-3501A) (Filobasidiella neoformans), this protein is Nascent polypeptide-associated complex subunit alpha (EGD2).